The following is a 55-amino-acid chain: Large ribosomal subunit protein bL33 (55 aa).

It belongs to the bacterial ribosomal protein bL33 family.

The protein is Large ribosomal subunit protein bL33 of Kocuria rhizophila (strain ATCC 9341 / DSM 348 / NBRC 103217 / DC2201).